An 80-amino-acid chain; its full sequence is MFPLVKNALNRLQVRSIQQTMARQSHQKRTPDFHDKYGNAVLASGATFCIVTWTYVATQVGIEWNLSPVGRVTPKEWRNQ.

The transit peptide at 1–24 (MFPLVKNALNRLQVRSIQQTMARQ) directs the protein to the mitochondrion. The Mitochondrial matrix segment spans residues 25–32 (SHQKRTPD). Residues 33–59 (FHDKYGNAVLASGATFCIVTWTYVATQ) form a helical membrane-spanning segment. Residues 60–80 (VGIEWNLSPVGRVTPKEWRNQ) are Mitochondrial intermembrane-facing.

Belongs to the cytochrome c oxidase VIIb family. Component of the cytochrome c oxidase (complex IV, CIV), a multisubunit enzyme composed of 14 subunits. The complex is composed of a catalytic core of 3 subunits MT-CO1, MT-CO2 and MT-CO3, encoded in the mitochondrial DNA, and 11 supernumerary subunits COX4I, COX5A, COX5B, COX6A, COX6B, COX6C, COX7A, COX7B, COX7C, COX8 and NDUFA4, which are encoded in the nuclear genome. The complex exists as a monomer or a dimer and forms supercomplexes (SCs) in the inner mitochondrial membrane with NADH-ubiquinone oxidoreductase (complex I, CI) and ubiquinol-cytochrome c oxidoreductase (cytochrome b-c1 complex, complex III, CIII), resulting in different assemblies (supercomplex SCI(1)III(2)IV(1) and megacomplex MCI(2)III(2)IV(2)).

The protein localises to the mitochondrion inner membrane. The protein operates within energy metabolism; oxidative phosphorylation. In terms of biological role, component of the cytochrome c oxidase, the last enzyme in the mitochondrial electron transport chain which drives oxidative phosphorylation. The respiratory chain contains 3 multisubunit complexes succinate dehydrogenase (complex II, CII), ubiquinol-cytochrome c oxidoreductase (cytochrome b-c1 complex, complex III, CIII) and cytochrome c oxidase (complex IV, CIV), that cooperate to transfer electrons derived from NADH and succinate to molecular oxygen, creating an electrochemical gradient over the inner membrane that drives transmembrane transport and the ATP synthase. Cytochrome c oxidase is the component of the respiratory chain that catalyzes the reduction of oxygen to water. Electrons originating from reduced cytochrome c in the intermembrane space (IMS) are transferred via the dinuclear copper A center (CU(A)) of subunit 2 and heme A of subunit 1 to the active site in subunit 1, a binuclear center (BNC) formed by heme A3 and copper B (CU(B)). The BNC reduces molecular oxygen to 2 water molecules using 4 electrons from cytochrome c in the IMS and 4 protons from the mitochondrial matrix. Plays a role in proper central nervous system (CNS) development in vertebrates. This is Cytochrome c oxidase subunit 7B, mitochondrial (COX7B) from Pongo abelii (Sumatran orangutan).